The sequence spans 693 residues: Ion-translocating oxidoreductase complex subunit C (693 aa).

4Fe-4S ferredoxin-type domains are found at residues Met-368–Tyr-397 and Lys-407–Tyr-436. The [4Fe-4S] cluster site is built by Cys-377, Cys-380, Cys-383, Cys-387, Cys-416, Cys-419, Cys-422, and Cys-426. The segment covering Arg-539–Ser-548 has biased composition (basic and acidic residues). The interval Arg-539–Pro-564 is disordered.

It belongs to the 4Fe4S bacterial-type ferredoxin family. RnfC subfamily. As to quaternary structure, the complex is composed of six subunits: RnfA, RnfB, RnfC, RnfD, RnfE and RnfG. The cofactor is [4Fe-4S] cluster.

The protein localises to the cell inner membrane. Functionally, part of a membrane-bound complex that couples electron transfer with translocation of ions across the membrane. This chain is Ion-translocating oxidoreductase complex subunit C, found in Pectobacterium atrosepticum (strain SCRI 1043 / ATCC BAA-672) (Erwinia carotovora subsp. atroseptica).